Reading from the N-terminus, the 346-residue chain is uncharacterized protein (346 aa).

This is an uncharacterized protein from Mycoplasma genitalium (strain ATCC 33530 / DSM 19775 / NCTC 10195 / G37) (Mycoplasmoides genitalium).